Reading from the N-terminus, the 162-residue chain is Peroxiredoxin-2C (162 aa).

Residues 4 to 162 enclose the Thioredoxin domain; sequence VAVGDTLPDG…SGAEEILKAL (159 aa). C51 functions as the Cysteine sulfenic acid (-SOH) intermediate in the catalytic mechanism.

This sequence belongs to the peroxiredoxin family. Prx5 subfamily. As to quaternary structure, monomer.

Its subcellular location is the cytoplasm. It catalyses the reaction [glutaredoxin]-dithiol + a hydroperoxide = [glutaredoxin]-disulfide + an alcohol + H2O. Its function is as follows. Reduces hydrogen peroxide and alkyl hydroperoxides with reducing equivalents provided through the thioredoxin or glutaredoxin system. May be involved in intracellular redox signaling. Thiol-specific peroxidase that catalyzes the reduction of hydrogen peroxide and organic hydroperoxides to water and alcohols, respectively. Plays a role in cell protection against oxidative stress by detoxifying peroxides. The protein is Peroxiredoxin-2C (PRXIIC) of Oryza sativa subsp. japonica (Rice).